Consider the following 56-residue polypeptide: Large ribosomal subunit protein bL33 (56 aa).

It belongs to the bacterial ribosomal protein bL33 family.

This is Large ribosomal subunit protein bL33 from Rickettsia africae (strain ESF-5).